Consider the following 231-residue polypeptide: Phosphoheptose isomerase (231 aa).

The SIS domain maps to 35–190; that stretch reads LAAVLGGGGR…CAAFDAALER (156 aa). Residue 50 to 52 coordinates substrate; sequence NGG. Residues His-59 and Glu-63 each coordinate Zn(2+). Substrate-binding positions include Glu-63, 92–93, 118–120, Ser-123, and Gln-170; these read ND and STS. Zn(2+) is bound by residues Gln-170 and His-178. Composition is skewed to low complexity over residues 197 to 206 and 214 to 225; these read AAGSAASTGR and ASTGRAAGAGRA. Positions 197 to 231 are disordered; that stretch reads AAGSAASTGRAARRERAASTGRAAGAGRAAQRKRR.

It belongs to the SIS family. GmhA subfamily. Zn(2+) serves as cofactor.

Its subcellular location is the cytoplasm. It carries out the reaction 2 D-sedoheptulose 7-phosphate = D-glycero-alpha-D-manno-heptose 7-phosphate + D-glycero-beta-D-manno-heptose 7-phosphate. It participates in carbohydrate biosynthesis; D-glycero-D-manno-heptose 7-phosphate biosynthesis; D-glycero-alpha-D-manno-heptose 7-phosphate and D-glycero-beta-D-manno-heptose 7-phosphate from sedoheptulose 7-phosphate: step 1/1. Its function is as follows. Catalyzes the isomerization of sedoheptulose 7-phosphate in D-glycero-D-manno-heptose 7-phosphate. In Streptomyces coelicolor (strain ATCC BAA-471 / A3(2) / M145), this protein is Phosphoheptose isomerase.